Reading from the N-terminus, the 310-residue chain is Glutaminase 1 (310 aa).

Substrate contacts are provided by Ser-66, Asn-117, Glu-161, Asn-168, Tyr-192, Tyr-244, and Val-262. Lys-294 is modified (N6-acetyllysine).

Belongs to the glutaminase family. In terms of assembly, homotetramer.

It catalyses the reaction L-glutamine + H2O = L-glutamate + NH4(+). The protein is Glutaminase 1 of Shigella flexneri.